Here is a 524-residue protein sequence, read N- to C-terminus: BEL1-like homeodomain protein 3 (524 aa).

The interval Ser-171 to Val-187 is SR/KY domain. Basic and acidic residues-rich tracts occupy residues Asn-195–Asp-205 and Glu-216–Ser-235. The disordered stretch occupies residues Asn-195 to Lys-236. Positions Glu-229 to Ile-300 are BELL domain. Positions Ala-346 to Met-408 form a DNA-binding region, homeobox. A disordered region spans residues Gln-429–Thr-463. Positions Asp-430–Ser-445 are enriched in basic and acidic residues. Low complexity predominate over residues Ser-446–Asn-459.

Belongs to the TALE/BELL homeobox family. In terms of assembly, may form heterodimeric complex with the TALE/KNOX protein STM. Interacts with OFP1, OFP2, OFP3, OFP4, OFP5 and OFP15.

Its subcellular location is the nucleus. Transcription factor that is responsive of the nuclear import of SHOOT MERISTEMLESS (STM). This is BEL1-like homeodomain protein 3 (BLH3) from Arabidopsis thaliana (Mouse-ear cress).